A 293-amino-acid polypeptide reads, in one-letter code: Exosome complex component RRP4 (293 aa).

In terms of domain architecture, S1 motif spans 79–159; that stretch reads EVGDIVVGRI…SDGAVSLHTR (81 aa). Phosphoserine is present on Ser124.

The protein belongs to the RRP4 family. Component of the RNA exosome core complex (Exo-9), composed of EXOSC1, EXOSC2, EXOSC3, EXOSC4, EXOSC5, EXOSC6, EXOSC7, EXOSC8 and EXOSC9; within the complex interacts with EXOSC4 and EXOSC7. The catalytically inactive RNA exosome core complex (Exo-9) associates with the catalytic subunit EXOSC10/RRP6. Exo-9 may associate with DIS3 to form the nucleolar exosome complex, or DIS3L to form the cytoplasmic exosome complex. Exo-9 is formed by a hexameric base ring consisting of the heterodimers EXOSC4-EXOSC9, EXOSC5-EXOSC8 and EXOSC6-EXOSC7, and a cap ring consisting of EXOSC1, EXOSC2 and EXOSC3. The RNA exosome complex associates with cofactors C1D/RRP47, MPHOSPH6/MPP6 and MTREX/MTR4. Interacts with GTPBP1. Interacts with ZFP36L1 (via N-terminus).

The protein resides in the cytoplasm. It is found in the nucleus. Its subcellular location is the nucleolus. In terms of biological role, non-catalytic component of the RNA exosome complex which has 3'-&gt;5' exoribonuclease activity and participates in a multitude of cellular RNA processing and degradation events. In the nucleus, the RNA exosome complex is involved in proper maturation of stable RNA species such as rRNA, snRNA and snoRNA, in the elimination of RNA processing by-products and non-coding 'pervasive' transcripts, such as antisense RNA species and promoter-upstream transcripts (PROMPTs), and of mRNAs with processing defects, thereby limiting or excluding their export to the cytoplasm. The RNA exosome may be involved in Ig class switch recombination (CSR) and/or Ig variable region somatic hypermutation (SHM) by targeting AICDA deamination activity to transcribed dsDNA substrates. In the cytoplasm, the RNA exosome complex is involved in general mRNA turnover and specifically degrades inherently unstable mRNAs containing AU-rich elements (AREs) within their 3' untranslated regions, and in RNA surveillance pathways, preventing translation of aberrant mRNAs. It seems to be involved in degradation of histone mRNA. The catalytic inactive RNA exosome core complex of 9 subunits (Exo-9) is proposed to play a pivotal role in the binding and presentation of RNA for ribonucleolysis, and to serve as a scaffold for the association with catalytic subunits and accessory proteins or complexes. EXOSC2 as peripheral part of the Exo-9 complex stabilizes the hexameric ring of RNase PH-domain subunits through contacts with EXOSC4 and EXOSC7. The chain is Exosome complex component RRP4 from Homo sapiens (Human).